A 122-amino-acid polypeptide reads, in one-letter code: Small ribosomal subunit protein uS13c (122 aa).

The protein belongs to the universal ribosomal protein uS13 family. In terms of assembly, part of the 30S ribosomal subunit.

It localises to the plastid. The protein localises to the chloroplast. Functionally, located at the top of the head of the 30S subunit, it contacts several helices of the 16S rRNA. In Cyanidium caldarium (Red alga), this protein is Small ribosomal subunit protein uS13c.